We begin with the raw amino-acid sequence, 414 residues long: MQSSRPSDRQLAIVVSVAVGIVVAVITTATFWWVYDLTLGRAQREAAQTAGARWSPSDGIKVITSSPPVTPTDGRQNWMGTQAWNEGVQAGQAWIQQYPNTVNVQVLIGMSSAQIWTYMQQYVSGALGVGCQYCHNINNFASDEYPQKIAARNMLRLVRDVNAEFIVNLPNWQGNYVQCATCHNNAPNNLEGFGAQFINSVPPIKVTVDPLDANGMAILDPAQKPEAIREPVLLKDAILFYIYNYQVWKPFDPNDPESGRGSLALTYDGGRTQDQVTINQNVMNYQAWSLGVGCTFCHNSRNFVAYELNPAGDNVLNPLYAYNKLKAQRMLLLTTWLAENWPRYGAIAKPEIPTGSGAASRYSYQRLGDGQIYNVPGCYTCHQGNNIPLASINQANIPSGDAGIVVLPPQIRGR.

Positions 1–24 (MQSSRPSDRQLAIVVSVAVGIVVA) are cleaved as a signal peptide. Heme is bound by residues M110, C131, C134, H135, M154, C179, C182, H183, M283, C294, C297, H298, C378, C381, and H382.

Post-translationally, binds 4 heme groups per subunit. The N-terminus is blocked.

It is found in the periplasm. Its function is as follows. Serves as the immediate electron donor to the oxidized BChl2 (bacteriochlorophyll dimer) that is oxidized in the first step of light-induced charge separation. Can also oxidize low-potential substrates. This Chloroflexus aurantiacus (strain ATCC 29366 / DSM 635 / J-10-fl) protein is Cytochrome c-554 (puf2C).